A 402-amino-acid polypeptide reads, in one-letter code: Olfactomedin-like protein 1 (402 aa).

The N-terminal stretch at Met1 to Asp28 is a signal peptide. N-linked (GlcNAc...) asparagine glycosylation is present at Asn66. A coiled-coil region spans residues Ser79 to Ile133. Asn138 and Asn183 each carry an N-linked (GlcNAc...) asparagine glycan. One can recognise an Olfactomedin-like domain in the interval Ser140–Arg397. Residues Cys141 and Cys324 are joined by a disulfide bond.

In terms of processing, highly N-glycosylated. In terms of tissue distribution, mainly expressed in the small intestine, liver, lung and heart.

Its subcellular location is the secreted. This chain is Olfactomedin-like protein 1 (OLFML1), found in Homo sapiens (Human).